Reading from the N-terminus, the 506-residue chain is Serine/threonine-protein kinase RIO1 (506 aa).

The disordered stretch occupies residues 22 to 52 (TASSSSDDEPEQAVVKQEKLEAGEQIEEQYD). Positions 142–506 (LNIDGCISTG…KKRAHRQHMK (365 aa)) constitute a Protein kinase domain. ATP contacts are provided by residues 148 to 156 (ISTGKEANV), Lys169, and Leu241. Asp285 acts as the Proton acceptor in catalysis. Asn290 is an ATP binding site. Residues Asn290 and Asp302 each contribute to the Mg(2+) site. Asp302 serves as the catalytic 4-aspartylphosphate intermediate. The segment at 418–506 (GDGFGEEHDD…KKRAHRQHMK (89 aa)) is disordered. Positions 424–435 (EHDDSDDNDDEE) are enriched in acidic residues. A compositionally biased stretch (basic and acidic residues) spans 454-490 (EKERKIAMHTRNREETAEERKERKAAVKEEKREQRKE). Residues 491-506 (KIPKHLKKRAHRQHMK) show a composition bias toward basic residues.

This sequence belongs to the protein kinase superfamily. RIO-type Ser/Thr kinase family. Requires Mg(2+) as cofactor. In terms of tissue distribution, expressed in vulva and uterine cells, uterine seam cells (utse), spermatheca and in the nervous system including chemosensory neurons in the head, nerve ring neurons (RID/RIF), inhibitory motor neurons (DA/DD/VA/VD), mechanosensory neurons (ALML/PLML) and tail sensory neurons (DVA//PDA). Also expressed in intestine and pharynx (procorpus) and rectal valve and gland.

The protein resides in the cytoplasm. The catalysed reaction is L-seryl-[protein] + ATP = O-phospho-L-seryl-[protein] + ADP + H(+). The enzyme catalyses L-threonyl-[protein] + ATP = O-phospho-L-threonyl-[protein] + ADP + H(+). Involved in the final steps of cytoplasmic maturation of the 40S ribosomal subunit. Despite the protein kinase domain is proposed to act predominantly as an ATPase. The catalytic activity regulates its dynamic association with the 40S subunit. Plays a role in oogenesis by regulating germ cell proliferation, progression through diplotene and diakinesis stages and oocyte maturation. Regulates germline development probably by regulating the phosphorylation of mpk-1. Involved in larval development. The protein is Serine/threonine-protein kinase RIO1 of Caenorhabditis elegans.